Reading from the N-terminus, the 574-residue chain is Methionine--tRNA ligase (574 aa).

The 'HIGH' region motif lies at 11-21 (PYINGIKHLGN). Zn(2+) is bound by residues C143, C146, C156, and C159. The 'KMSKS' region motif lies at 345-349 (KFSTS). T348 serves as a coordination point for ATP.

Belongs to the class-I aminoacyl-tRNA synthetase family. MetG type 1 subfamily. As to quaternary structure, monomer. Zn(2+) serves as cofactor.

The protein resides in the cytoplasm. It carries out the reaction tRNA(Met) + L-methionine + ATP = L-methionyl-tRNA(Met) + AMP + diphosphate. Is required not only for elongation of protein synthesis but also for the initiation of all mRNA translation through initiator tRNA(fMet) aminoacylation. The chain is Methionine--tRNA ligase from Streptomyces avermitilis (strain ATCC 31267 / DSM 46492 / JCM 5070 / NBRC 14893 / NCIMB 12804 / NRRL 8165 / MA-4680).